The primary structure comprises 66 residues: Small vasohibin-binding protein (66 aa).

Over residues 1-23 (MDPPARKEKSKVKEPAFRVEKAK) the composition is skewed to basic and acidic residues. A disordered region spans residues 1-30 (MDPPARKEKSKVKEPAFRVEKAKQKSAQQE). Residues 5-52 (ARKEKSKVKEPAFRVEKAKQKSAQQELKQRQRAEIYALNRVMTELEQQ) adopt a coiled-coil conformation.

It belongs to the SVBP family. In terms of assembly, interacts with VASH1 and VASH2. In terms of tissue distribution, highly expressed in bone marrow, spleen and testis.

Its subcellular location is the cytoplasm. It is found in the secreted. The protein localises to the cytoskeleton. Its function is as follows. Enhances the tyrosine carboxypeptidase activity of VASH1 and VASH2, thereby promoting the removal of the C-terminal tyrosine residue of alpha-tubulin. Also required to enhance the solubility and secretion of VASH1 and VASH2. Plays a role in axon and excitatory synapse formation. This chain is Small vasohibin-binding protein, found in Mus musculus (Mouse).